A 157-amino-acid polypeptide reads, in one-letter code: E3 ubiquitin-protein ligase RHA1B (157 aa).

The RING-type; atypical zinc finger occupies 85 to 129; it reads CTVCLSDFVSDDKIRQLPKCGHVFHHRCLDRWIVDCNKITCPICR.

It carries out the reaction S-ubiquitinyl-[E2 ubiquitin-conjugating enzyme]-L-cysteine + [acceptor protein]-L-lysine = [E2 ubiquitin-conjugating enzyme]-L-cysteine + N(6)-ubiquitinyl-[acceptor protein]-L-lysine.. It participates in protein modification; protein ubiquitination. Functionally, possesses E3 ubiquitin-protein ligase activity when associated with the E2 enzyme UBC8 in vitro. The chain is E3 ubiquitin-protein ligase RHA1B from Arabidopsis thaliana (Mouse-ear cress).